The following is a 306-amino-acid chain: 4-hydroxy-3-methylbut-2-enyl diphosphate reductase (306 aa).

Cysteine 12 is a [4Fe-4S] cluster binding site. 2 residues coordinate (2E)-4-hydroxy-3-methylbut-2-enyl diphosphate: histidine 41 and histidine 74. Dimethylallyl diphosphate contacts are provided by histidine 41 and histidine 74. Histidine 41 and histidine 74 together coordinate isopentenyl diphosphate. Cysteine 96 lines the [4Fe-4S] cluster pocket. Histidine 124 provides a ligand contact to (2E)-4-hydroxy-3-methylbut-2-enyl diphosphate. A dimethylallyl diphosphate-binding site is contributed by histidine 124. Histidine 124 provides a ligand contact to isopentenyl diphosphate. Glutamate 126 functions as the Proton donor in the catalytic mechanism. Position 164 (threonine 164) interacts with (2E)-4-hydroxy-3-methylbut-2-enyl diphosphate. Cysteine 194 provides a ligand contact to [4Fe-4S] cluster. 4 residues coordinate (2E)-4-hydroxy-3-methylbut-2-enyl diphosphate: serine 222, serine 223, asparagine 224, and serine 266. Dimethylallyl diphosphate contacts are provided by serine 222, serine 223, asparagine 224, and serine 266. Serine 222, serine 223, asparagine 224, and serine 266 together coordinate isopentenyl diphosphate.

The protein belongs to the IspH family. [4Fe-4S] cluster serves as cofactor.

It catalyses the reaction isopentenyl diphosphate + 2 oxidized [2Fe-2S]-[ferredoxin] + H2O = (2E)-4-hydroxy-3-methylbut-2-enyl diphosphate + 2 reduced [2Fe-2S]-[ferredoxin] + 2 H(+). The enzyme catalyses dimethylallyl diphosphate + 2 oxidized [2Fe-2S]-[ferredoxin] + H2O = (2E)-4-hydroxy-3-methylbut-2-enyl diphosphate + 2 reduced [2Fe-2S]-[ferredoxin] + 2 H(+). It functions in the pathway isoprenoid biosynthesis; dimethylallyl diphosphate biosynthesis; dimethylallyl diphosphate from (2E)-4-hydroxy-3-methylbutenyl diphosphate: step 1/1. Its pathway is isoprenoid biosynthesis; isopentenyl diphosphate biosynthesis via DXP pathway; isopentenyl diphosphate from 1-deoxy-D-xylulose 5-phosphate: step 6/6. Catalyzes the conversion of 1-hydroxy-2-methyl-2-(E)-butenyl 4-diphosphate (HMBPP) into a mixture of isopentenyl diphosphate (IPP) and dimethylallyl diphosphate (DMAPP). Acts in the terminal step of the DOXP/MEP pathway for isoprenoid precursor biosynthesis. The protein is 4-hydroxy-3-methylbut-2-enyl diphosphate reductase of Ruthia magnifica subsp. Calyptogena magnifica.